Consider the following 415-residue polypeptide: MASAEIIAVGTELLLGQIVNSNAAFISQELAADGIYVYHHTVVGDNPERLKEVIKIAENRSDILIFTGGLGPTEDDITKQILADHLNKRLVEDEFHMNKITEYFTSRSRKMTENNKLQAVIIEDSVVLNNDYGFAAGMYLKANKHTYILLPGPPSEMKPMFTSYANPLLVSENGEKIILESKIMRFFGIGESQLAADLNDLILNQVNPTLATYAGDNEVVVRITATASTKEKAAALVKDMEEEILRRDGTFLYGYGEVSLPEHVTAMLLERKMTIAAAESFTAGLFQAEIARFPGISSIFKGGMVTYSEEVKQSMLQVPAEVIEEHGVVSSECAKVMAENVRRLCDTDIGISFTGVAGPDSLEGHPAGTIWIGLSVKGNESEAFQYVYGRDRNHNRRRAVKQGFQLIKHFLETNK.

This sequence belongs to the CinA family.

This Listeria welshimeri serovar 6b (strain ATCC 35897 / DSM 20650 / CCUG 15529 / CIP 8149 / NCTC 11857 / SLCC 5334 / V8) protein is Putative competence-damage inducible protein.